The primary structure comprises 320 residues: tRNA dimethylallyltransferase (320 aa).

Gly-5 to Ser-12 lines the ATP pocket. Residue Thr-7–Ser-12 participates in substrate binding. The tract at residues Asp-30–Gln-33 is interaction with substrate tRNA.

It belongs to the IPP transferase family. Monomer. It depends on Mg(2+) as a cofactor.

The enzyme catalyses adenosine(37) in tRNA + dimethylallyl diphosphate = N(6)-dimethylallyladenosine(37) in tRNA + diphosphate. In terms of biological role, catalyzes the transfer of a dimethylallyl group onto the adenine at position 37 in tRNAs that read codons beginning with uridine, leading to the formation of N6-(dimethylallyl)adenosine (i(6)A). The chain is tRNA dimethylallyltransferase from Heliobacterium modesticaldum (strain ATCC 51547 / Ice1).